A 439-amino-acid chain; its full sequence is tRNA-2-methylthio-N(6)-dimethylallyladenosine synthase (439 aa).

One can recognise an MTTase N-terminal domain in the interval 5 to 121; it reads KKLFIKTYGC…LPELEAKTRA (117 aa). Positions 14, 50, 84, 159, 163, and 166 each coordinate [4Fe-4S] cluster. Residues 145–378 enclose the Radical SAM core domain; it reads AKRGPTAFLT…ITRHQREIQD (234 aa). Residues 378-439 enclose the TRAM domain; that stretch reads DGMVGREVSV…GANSLAGELA (62 aa).

The protein belongs to the methylthiotransferase family. MiaB subfamily. As to quaternary structure, monomer. [4Fe-4S] cluster is required as a cofactor.

Its subcellular location is the cytoplasm. The catalysed reaction is N(6)-dimethylallyladenosine(37) in tRNA + (sulfur carrier)-SH + AH2 + 2 S-adenosyl-L-methionine = 2-methylsulfanyl-N(6)-dimethylallyladenosine(37) in tRNA + (sulfur carrier)-H + 5'-deoxyadenosine + L-methionine + A + S-adenosyl-L-homocysteine + 2 H(+). Catalyzes the methylthiolation of N6-(dimethylallyl)adenosine (i(6)A), leading to the formation of 2-methylthio-N6-(dimethylallyl)adenosine (ms(2)i(6)A) at position 37 in tRNAs that read codons beginning with uridine. This chain is tRNA-2-methylthio-N(6)-dimethylallyladenosine synthase, found in Ruegeria pomeroyi (strain ATCC 700808 / DSM 15171 / DSS-3) (Silicibacter pomeroyi).